A 209-amino-acid polypeptide reads, in one-letter code: Imidazoleglycerol-phosphate dehydratase (209 aa).

It belongs to the imidazoleglycerol-phosphate dehydratase family.

It localises to the cytoplasm. The enzyme catalyses D-erythro-1-(imidazol-4-yl)glycerol 3-phosphate = 3-(imidazol-4-yl)-2-oxopropyl phosphate + H2O. It participates in amino-acid biosynthesis; L-histidine biosynthesis; L-histidine from 5-phospho-alpha-D-ribose 1-diphosphate: step 6/9. This chain is Imidazoleglycerol-phosphate dehydratase, found in Microcystis aeruginosa (strain NIES-843 / IAM M-2473).